The following is a 369-amino-acid chain: UDP-N-acetylglucosamine--N-acetylmuramyl-(pentapeptide) pyrophosphoryl-undecaprenol N-acetylglucosamine transferase (369 aa).

UDP-N-acetyl-alpha-D-glucosamine is bound by residues 16 to 18, asparagine 130, arginine 171, serine 203, isoleucine 253, and glutamine 298; that span reads TGG.

This sequence belongs to the glycosyltransferase 28 family. MurG subfamily.

The protein localises to the cell inner membrane. The catalysed reaction is di-trans,octa-cis-undecaprenyl diphospho-N-acetyl-alpha-D-muramoyl-L-alanyl-D-glutamyl-meso-2,6-diaminopimeloyl-D-alanyl-D-alanine + UDP-N-acetyl-alpha-D-glucosamine = di-trans,octa-cis-undecaprenyl diphospho-[N-acetyl-alpha-D-glucosaminyl-(1-&gt;4)]-N-acetyl-alpha-D-muramoyl-L-alanyl-D-glutamyl-meso-2,6-diaminopimeloyl-D-alanyl-D-alanine + UDP + H(+). The protein operates within cell wall biogenesis; peptidoglycan biosynthesis. Cell wall formation. Catalyzes the transfer of a GlcNAc subunit on undecaprenyl-pyrophosphoryl-MurNAc-pentapeptide (lipid intermediate I) to form undecaprenyl-pyrophosphoryl-MurNAc-(pentapeptide)GlcNAc (lipid intermediate II). This is UDP-N-acetylglucosamine--N-acetylmuramyl-(pentapeptide) pyrophosphoryl-undecaprenol N-acetylglucosamine transferase from Cytophaga hutchinsonii (strain ATCC 33406 / DSM 1761 / CIP 103989 / NBRC 15051 / NCIMB 9469 / D465).